Reading from the N-terminus, the 258-residue chain is Transmembrane O-methyltransferase homolog (258 aa).

S-adenosyl-L-methionine contacts are provided by residues Glu104, 106–107 (GT), Ser112, Glu130, and Ser160.

Belongs to the class I-like SAM-binding methyltransferase superfamily. Cation-dependent O-methyltransferase family. Interacts with LHFPL5, PCDH15, TMC1, TMC2 and TMIE. Interacts directly with TMC1. The interaction of TOMT with TMC1 and TMC2 is required for the transportation of TMC1/2 into the stereocilia of hair cells.

It is found in the cytoplasm. It localises to the endoplasmic reticulum. The catalysed reaction is a catechol + S-adenosyl-L-methionine = a guaiacol + S-adenosyl-L-homocysteine + H(+). Catalyzes the O-methylation, and thereby the inactivation, of catecholamine neurotransmitters and catechol hormones. Required for auditory function. Component of the cochlear hair cell's mechanotransduction (MET) machinery. Involved in the assembly of the asymmetric tip-link MET complex. Required for transportation of TMC1 and TMC2 proteins into the mechanically sensitive stereocilia of the hair cells. The function in MET is independent of the enzymatic activity. The protein is Transmembrane O-methyltransferase homolog of Rattus norvegicus (Rat).